The chain runs to 390 residues: Endoglucanase gh5-1 (390 aa).

The first 16 residues, 1–16 (MKATILASTFAAGALA), serve as a signal peptide directing secretion. In terms of domain architecture, CBM1 spans 17–52 (QSGAWGQCGGNGWSGATSCISGYACNYVNDWYSQCQ). N-linked (GlcNAc...) asparagine glycans are attached at residues Asn157 and Asn261.

It belongs to the glycosyl hydrolase 5 (cellulase A) family. N-glycosylated.

The protein resides in the secreted. It catalyses the reaction Endohydrolysis of (1-&gt;4)-beta-D-glucosidic linkages in cellulose, lichenin and cereal beta-D-glucans.. Its function is as follows. Endoglucanase that plays an important role in biomass degradation. Binds onto plant cell walls to participate in the hydrolysis of cellulose. The chain is Endoglucanase gh5-1 from Neurospora crassa (strain ATCC 24698 / 74-OR23-1A / CBS 708.71 / DSM 1257 / FGSC 987).